The chain runs to 284 residues: Bifunctional protein FolD 1 (284 aa).

Residues 166-168 and Ile232 contribute to the NADP(+) site; that span reads GAS.

The protein belongs to the tetrahydrofolate dehydrogenase/cyclohydrolase family. In terms of assembly, homodimer.

The enzyme catalyses (6R)-5,10-methylene-5,6,7,8-tetrahydrofolate + NADP(+) = (6R)-5,10-methenyltetrahydrofolate + NADPH. It carries out the reaction (6R)-5,10-methenyltetrahydrofolate + H2O = (6R)-10-formyltetrahydrofolate + H(+). It participates in one-carbon metabolism; tetrahydrofolate interconversion. Catalyzes the oxidation of 5,10-methylenetetrahydrofolate to 5,10-methenyltetrahydrofolate and then the hydrolysis of 5,10-methenyltetrahydrofolate to 10-formyltetrahydrofolate. This chain is Bifunctional protein FolD 1, found in Pseudomonas syringae pv. syringae (strain B728a).